A 142-amino-acid chain; its full sequence is ATP synthase subunit b' (142 aa).

The helical transmembrane segment at Thr7–Phe27 threads the bilayer.

Belongs to the ATPase B chain family. In terms of assembly, F-type ATPases have 2 components, F(1) - the catalytic core - and F(0) - the membrane proton channel. F(1) has five subunits: alpha(3), beta(3), gamma(1), delta(1), epsilon(1). F(0) has four main subunits: a(1), b(1), b'(1) and c(10-14). The alpha and beta chains form an alternating ring which encloses part of the gamma chain. F(1) is attached to F(0) by a central stalk formed by the gamma and epsilon chains, while a peripheral stalk is formed by the delta, b and b' chains.

It localises to the cellular thylakoid membrane. Its function is as follows. F(1)F(0) ATP synthase produces ATP from ADP in the presence of a proton or sodium gradient. F-type ATPases consist of two structural domains, F(1) containing the extramembraneous catalytic core and F(0) containing the membrane proton channel, linked together by a central stalk and a peripheral stalk. During catalysis, ATP synthesis in the catalytic domain of F(1) is coupled via a rotary mechanism of the central stalk subunits to proton translocation. Component of the F(0) channel, it forms part of the peripheral stalk, linking F(1) to F(0). The b'-subunit is a diverged and duplicated form of b found in plants and photosynthetic bacteria. The sequence is that of ATP synthase subunit b' from Acaryochloris marina (strain MBIC 11017).